A 289-amino-acid polypeptide reads, in one-letter code: Pantothenate synthetase (289 aa).

30-37 (MGYLHEGH) serves as a coordination point for ATP. The active-site Proton donor is the His37. Gln61 contacts (R)-pantoate. Gln61 provides a ligand contact to beta-alanine. 147–150 (GLKD) is an ATP binding site. Gln153 is a (R)-pantoate binding site. Residues Val176 and 184-187 (KSSR) contribute to the ATP site.

Belongs to the pantothenate synthetase family. As to quaternary structure, homodimer.

It is found in the cytoplasm. It catalyses the reaction (R)-pantoate + beta-alanine + ATP = (R)-pantothenate + AMP + diphosphate + H(+). Its pathway is cofactor biosynthesis; (R)-pantothenate biosynthesis; (R)-pantothenate from (R)-pantoate and beta-alanine: step 1/1. Functionally, catalyzes the condensation of pantoate with beta-alanine in an ATP-dependent reaction via a pantoyl-adenylate intermediate. The sequence is that of Pantothenate synthetase from Geobacillus thermodenitrificans (strain NG80-2).